The sequence spans 263 residues: Acyl-[acyl-carrier-protein]--UDP-N-acetylglucosamine O-acyltransferase (263 aa).

The protein belongs to the transferase hexapeptide repeat family. LpxA subfamily. As to quaternary structure, homotrimer.

It is found in the cytoplasm. It catalyses the reaction a (3R)-hydroxyacyl-[ACP] + UDP-N-acetyl-alpha-D-glucosamine = a UDP-3-O-[(3R)-3-hydroxyacyl]-N-acetyl-alpha-D-glucosamine + holo-[ACP]. Its pathway is glycolipid biosynthesis; lipid IV(A) biosynthesis; lipid IV(A) from (3R)-3-hydroxytetradecanoyl-[acyl-carrier-protein] and UDP-N-acetyl-alpha-D-glucosamine: step 1/6. Its function is as follows. Involved in the biosynthesis of lipid A, a phosphorylated glycolipid that anchors the lipopolysaccharide to the outer membrane of the cell. The polypeptide is Acyl-[acyl-carrier-protein]--UDP-N-acetylglucosamine O-acyltransferase (Xanthomonas oryzae pv. oryzae (strain PXO99A)).